The primary structure comprises 486 residues: Cobyric acid synthase (486 aa).

Residues 248 to 435 enclose the GATase cobBQ-type domain; it reads VLNVVVPVLP…LHGLFESPAA (188 aa). Catalysis depends on Cys-329, which acts as the Nucleophile. His-427 is a catalytic residue.

Belongs to the CobB/CobQ family. CobQ subfamily.

It functions in the pathway cofactor biosynthesis; adenosylcobalamin biosynthesis. Its function is as follows. Catalyzes amidations at positions B, D, E, and G on adenosylcobyrinic A,C-diamide. NH(2) groups are provided by glutamine, and one molecule of ATP is hydrogenolyzed for each amidation. In Pseudomonas syringae pv. syringae (strain B728a), this protein is Cobyric acid synthase.